The following is a 306-amino-acid chain: Pantothenate kinase (306 aa).

Position 91 to 98 (91 to 98) interacts with ATP; it reads GSVAVGKS.

This sequence belongs to the prokaryotic pantothenate kinase family.

The protein localises to the cytoplasm. The enzyme catalyses (R)-pantothenate + ATP = (R)-4'-phosphopantothenate + ADP + H(+). Its pathway is cofactor biosynthesis; coenzyme A biosynthesis; CoA from (R)-pantothenate: step 1/5. The protein is Pantothenate kinase of Streptococcus pneumoniae (strain JJA).